We begin with the raw amino-acid sequence, 162 residues long: MGSMKEIFNSLFLKELLKGMSVTGKYFFARKITVQYPEEKTPQSFRFRGLHALRRYPNGEERCIACKLCEAICPALAITIEAEPRDDGSRRTTRYDIDLTKCIFCGFCEEACPVDAVVETRIFEYHGEKRGDLYYTKQMLLANGDRYEDQIAKDRELDASYR.

4Fe-4S ferredoxin-type domains follow at residues 53-83 and 93-122; these read LRRYPNGEERCIACKLCEAICPALAITIEAE and TRYDIDLTKCIFCGFCEEACPVDAVVETRI. [4Fe-4S] cluster-binding residues include Cys63, Cys66, Cys69, Cys73, Cys102, Cys105, Cys108, and Cys112.

This sequence belongs to the complex I 23 kDa subunit family. In terms of assembly, NDH-1 is composed of 14 different subunits. Subunits NuoA, H, J, K, L, M, N constitute the membrane sector of the complex. It depends on [4Fe-4S] cluster as a cofactor.

The protein localises to the cell inner membrane. The enzyme catalyses a quinone + NADH + 5 H(+)(in) = a quinol + NAD(+) + 4 H(+)(out). NDH-1 shuttles electrons from NADH, via FMN and iron-sulfur (Fe-S) centers, to quinones in the respiratory chain. The immediate electron acceptor for the enzyme in this species is believed to be ubiquinone. Couples the redox reaction to proton translocation (for every two electrons transferred, four hydrogen ions are translocated across the cytoplasmic membrane), and thus conserves the redox energy in a proton gradient. The sequence is that of NADH-quinone oxidoreductase subunit I from Dechloromonas aromatica (strain RCB).